The sequence spans 1189 residues: Structural maintenance of chromosomes protein 2 (1189 aa).

32–39 (GLNGSGKS) is a binding site for ATP. The stretch at 211–503 (KEARASYLEY…ELCESIEAKH (293 aa)) forms a coiled coil. In terms of domain architecture, SMC hinge spans 522–639 (VKGLVVTLIT…CSSMDNAKKV (118 aa)). The stretch at 674-1030 (ILSKLKTMRD…ELDRKKNKAL (357 aa)) forms a coiled coil. Basic and acidic residues-rich tracts occupy residues 782-792 (NAEAERGKEIK) and 803-814 (KKADDSSRKMKE). Disordered regions lie at residues 782-814 (NAEA…KMKE) and 867-886 (SLKN…EERT).

It belongs to the SMC family. SMC2 subfamily. In terms of assembly, forms a heterodimer with SMC4. Component of the condensin complex, which contains the SMC2 and SMC4 heterodimer, and probably some non SMC subunits that regulate the complex.

Its subcellular location is the nucleus. The protein resides in the cytoplasm. The protein localises to the chromosome. Functionally, central component of the condensin complex, a complex required for conversion of interphase chromatin into mitotic-like condense chromosomes. The condensin complex probably introduces positive supercoils into relaxed DNA in the presence of type I topoisomerases and converts nicked DNA into positive knotted forms in the presence of type II topoisomerases. The polypeptide is Structural maintenance of chromosomes protein 2 (SMC2) (Gallus gallus (Chicken)).